We begin with the raw amino-acid sequence, 282 residues long: MKLAVITDSTATLPTDLKQDKAIFSLDIPVIIDDETYFEGRNLSIDDFYQKMADSQNLPKTSQPSLSELDNLLGLLSSKGYTHVIGLFLAGGISGFWQNIQFLAEEHPEIEMAFPDSKITSAPLGSMVKNVLDWSRQGMTFQAILNKLQEQIDGTTAFIMVDDLNHLVKGGRLSNGSALLGNLLSIKPILRFDEEGKIVVYEKVRTEKKAMKRLVEILNDLIADGQYNVFIIHSKAQDKADYLKRLLQDSGYQYDIEEVHFGAVIATHLGEGAIAFGVTPRL.

One can recognise a DegV domain in the interval 3 to 280 (LAVITDSTAT…EGAIAFGVTP (278 aa)). Residues T61 and S94 each contribute to the hexadecanoate site.

Its function is as follows. May bind long-chain fatty acids, such as palmitate, and may play a role in lipid transport or fatty acid metabolism. The protein is DegV domain-containing protein SPy_0865/M5005_Spy0672 of Streptococcus pyogenes serotype M1.